The primary structure comprises 894 residues: Translation initiation factor IF-2 (894 aa).

The segment at 52–301 (DRGAAPNKLT…RRPSTLTQGF (250 aa)) is disordered. The span at 68-82 (STLNIPSTGGKSKSV) shows a compositional bias: polar residues. A compositionally biased stretch (basic and acidic residues) spans 107 to 154 (EQARREAEELAQHQVQRDAEEKAKRAAEDKAKREAAEQAKRVAAESDK). Positions 155–168 (LTNQQTNTMTKSPQ) are enriched in polar residues. 2 stretches are compositionally biased toward basic and acidic residues: residues 171–214 (EKAR…ERGG) and 237–254 (HARE…GDRR). Basic residues predominate over residues 255–269 (SRTRGGKATKQKKTS). A compositionally biased stretch (basic and acidic residues) spans 270–283 (RLSESKADREEARA). Positions 393-562 (SRAPVVTIMG…LLQAEVLELK (170 aa)) constitute a tr-type G domain. Residues 402–409 (GHVDHGKT) form a G1 region. GTP is bound at residue 402–409 (GHVDHGKT). A G2 region spans residues 427 to 431 (GITQH). A G3 region spans residues 448–451 (DTPG). Residues 448–452 (DTPGH) and 502–505 (NKID) each bind GTP. A G4 region spans residues 502-505 (NKID). Residues 538–540 (SAK) form a G5 region.

The protein belongs to the TRAFAC class translation factor GTPase superfamily. Classic translation factor GTPase family. IF-2 subfamily.

The protein localises to the cytoplasm. One of the essential components for the initiation of protein synthesis. Protects formylmethionyl-tRNA from spontaneous hydrolysis and promotes its binding to the 30S ribosomal subunits. Also involved in the hydrolysis of GTP during the formation of the 70S ribosomal complex. This Sodalis glossinidius (strain morsitans) protein is Translation initiation factor IF-2.